The chain runs to 148 residues: Putative anti-anti-sigma factor Rv2638 (148 aa).

Residues Leu-30–Gly-141 form the STAS domain.

Belongs to the anti-sigma-factor antagonist family. In terms of assembly, interacts with unphosphorylated OprA.

This is Putative anti-anti-sigma factor Rv2638 from Mycobacterium tuberculosis (strain ATCC 25618 / H37Rv).